A 117-amino-acid chain; its full sequence is Holo-[acyl-carrier-protein] synthase (117 aa).

Mg(2+) is bound by residues aspartate 8 and glutamate 59.

Belongs to the P-Pant transferase superfamily. AcpS family. The cofactor is Mg(2+).

Its subcellular location is the cytoplasm. The catalysed reaction is apo-[ACP] + CoA = holo-[ACP] + adenosine 3',5'-bisphosphate + H(+). Functionally, transfers the 4'-phosphopantetheine moiety from coenzyme A to a Ser of acyl-carrier-protein. The sequence is that of Holo-[acyl-carrier-protein] synthase from Staphylococcus carnosus (strain TM300).